A 396-amino-acid polypeptide reads, in one-letter code: Phosphoglycerate kinase (396 aa).

Residues 21-23, arginine 36, 59-62, arginine 118, and arginine 151 each bind substrate; these read DFN and HFDR. ATP is bound by residues lysine 201, glutamate 323, and 353 to 356; that span reads GGDT.

Belongs to the phosphoglycerate kinase family. As to quaternary structure, monomer.

The protein resides in the cytoplasm. The enzyme catalyses (2R)-3-phosphoglycerate + ATP = (2R)-3-phospho-glyceroyl phosphate + ADP. It participates in carbohydrate degradation; glycolysis; pyruvate from D-glyceraldehyde 3-phosphate: step 2/5. The sequence is that of Phosphoglycerate kinase from Caulobacter sp. (strain K31).